A 370-amino-acid polypeptide reads, in one-letter code: Peptidyl-prolyl cis-trans isomerase D (370 aa).

At S5 the chain carries Phosphoserine. Residues 19–183 (FFDVDIGGER…KLCVIAECGE (165 aa)) enclose the PPIase cyclophilin-type domain. An N6-acetyllysine modification is found at K171. The chaperone activity stretch occupies residues 185–215 (KEGDEWGIFPKDGSGDSHPDFPEDADIDLKD). S198 carries the post-translational modification Phosphoserine. Residues 214–370 (KDVDKILLIS…EKAVYAKMFA (157 aa)) form an interaction with HSP90AB1 region. TPR repeat units follow at residues 223 to 256 (SEDLKNIGNTFFKSQNWEMAIKKYAKVLRYLDSS), 273 to 306 (LSCVLNIGACKLKMSNWQGAIDSCLEALEMDPSN), and 308 to 340 (KALYRKAQGWQGLKEYDQALADLKKAQEIAPGD).

The protein belongs to the cyclophilin-type PPIase family. PPIase D subfamily. As to quaternary structure, identified in ESR1 or NR3C1/GCR steroid receptor-chaperone complexes. Found in HSP90 chaperone complexes with kinase clients LCK or EIF2AK1. Two monomers associate with one HSP90 homodimer. Interacts with HSP90AA1. Interacts with HSP90AB1; PPID and FKBP4 compete for binding to HSP90AB1 and the interaction is mutually exclusive with the PPID:HSPA8 interaction. Interacts with HSPA8; PPID and STIP1 but not FKBP4 compete for binding to HSPA8 and the interaction is mutually exclusive with the PPID:HSP90AB1 interaction. Interacts with S100A1 and S100A2; the interactions dissociate the PPID:HSP90AA1 interaction. Interacts with S100A6. Interacts with MYB, ILF2, XRCC6, RACK1 and RPS3. Interacts with cytoplasmic dynein 1 intermediate chain (DYNC1I1 or DYNC1I2).

It localises to the cytoplasm. The protein resides in the nucleus. Its subcellular location is the nucleolus. The protein localises to the nucleoplasm. The enzyme catalyses [protein]-peptidylproline (omega=180) = [protein]-peptidylproline (omega=0). Less sensitive to inhibition by cyclosporin A than is CYP-18. Functionally, PPIase that catalyzes the cis-trans isomerization of proline imidic peptide bonds in oligopeptides and may therefore assist protein folding. Proposed to act as a co-chaperone in HSP90 complexes such as in unligated steroid receptors heterocomplexes. Different co-chaperones seem to compete for association with HSP90 thus establishing distinct HSP90-co-chaperone-receptor complexes with the potential to exert tissue-specific receptor activity control. May have a preference for estrogen receptor complexes and is not found in glucocorticoid receptor complexes. May be involved in cytoplasmic dynein-dependent movement of the receptor from the cytoplasm to the nucleus. May regulate MYB by inhibiting its DNA-binding activity. Involved in regulation of AHR signaling by promoting the formation of the AHR:ARNT dimer; the function is independent of HSP90 but requires the chaperone activity region. Involved in regulation of UV radiation-induced apoptosis. The polypeptide is Peptidyl-prolyl cis-trans isomerase D (Rattus norvegicus (Rat)).